The sequence spans 318 residues: Ribonuclease Z (318 aa).

Residues His63, His65, Asp67, His68, His142, Asp213, and His273 each coordinate Zn(2+). Catalysis depends on Asp67, which acts as the Proton acceptor.

This sequence belongs to the RNase Z family. In terms of assembly, homodimer. It depends on Zn(2+) as a cofactor.

It carries out the reaction Endonucleolytic cleavage of RNA, removing extra 3' nucleotides from tRNA precursor, generating 3' termini of tRNAs. A 3'-hydroxy group is left at the tRNA terminus and a 5'-phosphoryl group is left at the trailer molecule.. In terms of biological role, zinc phosphodiesterase, which displays some tRNA 3'-processing endonuclease activity. Probably involved in tRNA maturation, by removing a 3'-trailer from precursor tRNA. The sequence is that of Ribonuclease Z from Leuconostoc mesenteroides subsp. mesenteroides (strain ATCC 8293 / DSM 20343 / BCRC 11652 / CCM 1803 / JCM 6124 / NCDO 523 / NBRC 100496 / NCIMB 8023 / NCTC 12954 / NRRL B-1118 / 37Y).